Reading from the N-terminus, the 549-residue chain is Fumarate hydratase 1, mitochondrial (549 aa).

Cysteine 114 is a binding site for [4Fe-4S] cluster. Residues 115-116 (QD), arginine 154, glycine 197, and 200-206 (NKSFLLQ) each bind (S)-malate. Residues cysteine 233 and cysteine 328 each contribute to the [4Fe-4S] cluster site. Residues arginine 404, 450–454 (TTAGR), and lysine 474 each bind (S)-malate.

Belongs to the class-I fumarase family. As to quaternary structure, homodimer. [4Fe-4S] cluster is required as a cofactor.

The protein localises to the mitochondrion. It catalyses the reaction (S)-malate = fumarate + H2O. It participates in carbohydrate metabolism; tricarboxylic acid cycle; (S)-malate from fumarate: step 1/1. Specifically and competitively inhibited by 2-thiomalate, which coordinates with the catalytic [4Fe-4S] cluster. Functionally, catalyzes the reversible hydration of fumarate to (S)-malate. Catalyzes the hydration of fumarate to L-malate in the tricarboxylic acid (TCA) cycle to facilitate a transition step in the production of energy in the form of NADH. This Leishmania major protein is Fumarate hydratase 1, mitochondrial.